The following is a 493-amino-acid chain: Glutamate--tRNA ligase (493 aa).

The 'HIGH' region signature appears at 10-20 (PSPTGDPHVGT). Positions 251–255 (KLSKR) match the 'KMSKS' region motif. Residue K254 coordinates ATP.

This sequence belongs to the class-I aminoacyl-tRNA synthetase family. Glutamate--tRNA ligase type 1 subfamily. In terms of assembly, monomer.

The protein localises to the cytoplasm. It carries out the reaction tRNA(Glu) + L-glutamate + ATP = L-glutamyl-tRNA(Glu) + AMP + diphosphate. In terms of biological role, catalyzes the attachment of glutamate to tRNA(Glu) in a two-step reaction: glutamate is first activated by ATP to form Glu-AMP and then transferred to the acceptor end of tRNA(Glu). This Pseudomonas putida (strain GB-1) protein is Glutamate--tRNA ligase.